The following is a 579-amino-acid chain: Probable pectinesterase/pectinesterase inhibitor 7 (579 aa).

The first 20 residues, 1–20, serve as a signal peptide directing secretion; that stretch reads MESPIFILITLSFFLQSVLA. A pectinesterase inhibitor 7 region spans residues 22–185; that stretch reads SQTLSNSSTI…TKLLGVSLAL (164 aa). N-linked (GlcNAc...) asparagine glycosylation is found at N27, N115, N174, N274, N277, N287, N326, and N333. The interval 265–564 is pectinesterase 7; sequence VTVSQDGTGN…TVTGLFIEAD (300 aa). T342 is a binding site for substrate. N359 is a glycosylation site (N-linked (GlcNAc...) asparagine). Q372 lines the substrate pocket. The active-site Proton donor; for pectinesterase activity is D395. Cysteines 409 and 429 form a disulfide. Residue D416 is the Nucleophile; for pectinesterase activity of the active site. N-linked (GlcNAc...) asparagine glycosylation is found at N462 and N475. Substrate contacts are provided by R484 and W486. Residues N526, N533, N547, and N553 are each glycosylated (N-linked (GlcNAc...) asparagine).

The protein in the N-terminal section; belongs to the PMEI family. In the C-terminal section; belongs to the pectinesterase family. Expressed in siliques.

The protein resides in the secreted. It localises to the cell wall. The catalysed reaction is [(1-&gt;4)-alpha-D-galacturonosyl methyl ester](n) + n H2O = [(1-&gt;4)-alpha-D-galacturonosyl](n) + n methanol + n H(+). Its pathway is glycan metabolism; pectin degradation; 2-dehydro-3-deoxy-D-gluconate from pectin: step 1/5. In terms of biological role, acts in the modification of cell walls via demethylesterification of cell wall pectin. This chain is Probable pectinesterase/pectinesterase inhibitor 7 (PME7), found in Arabidopsis thaliana (Mouse-ear cress).